Consider the following 1097-residue polypeptide: Chitin synthase 2 (1097 aa).

Residues 1–46 form a disordered region; it reads MAGYGHSTAGGFGSGSGSGPPGPQYMLPQYDEGDDPDADATPAGQG. Over 1 to 748 the chain is Extracellular; it reads MAGYGHSTAG…HVEFLYHLLQ (748 aa). Gly residues predominate over residues 8-19; sequence TAGGFGSGSGSG. N-linked (GlcNAc...) asparagine glycosylation is present at Asn55. Disordered regions lie at residues 148–217 and 259–322; these read SGHG…YPRY and SSQI…RPPQ. Polar residues predominate over residues 284-296; the sequence is STTYSSNTGTSAS. Positions 299–313 are enriched in basic and acidic residues; sequence DKFEHYGPIPEEGKH. 2 N-linked (GlcNAc...) asparagine glycosylation sites follow: Asn416 and Asn424. Residues 749–769 form a helical membrane-spanning segment; it reads LLFTYFSLANFYLAFYFIAGG. Residues 770–786 are Cytoplasmic-facing; sequence LADPHVDPFNSDGHVAR. The chain crosses the membrane as a helical span at residues 787 to 807; sequence IIFNILRYVCVLLICTQFILS. At 808–821 the chain is on the extracellular side; sequence LGNRPQGAKRMYLA. Residues 822 to 842 form a helical membrane-spanning segment; it reads SMIIYAVIMVYTTFATIFIVV. The Cytoplasmic portion of the chain corresponds to 843 to 865; that stretch reads RQIQPSQKSDDKPDLELGNNVFT. Residues 866–886 form a helical membrane-spanning segment; it reads NLIVSVASTLGLYFVMSFLYL. Residues 887–894 are Extracellular-facing; sequence DPWHMFTS. The helical transmembrane segment at 895-915 threads the bilayer; it reads AIQYFVLLPSYICTLQIYAFC. Residues 916–993 are Cytoplasmic-facing; it reads NTHDVTWGTK…QDYYKSVRTY (78 aa). The chain crosses the membrane as a helical span at residues 994 to 1014; the sequence is MVVSWMVANATLAMAVSEAYG. The Extracellular portion of the chain corresponds to 1015-1025; the sequence is DSEIGDNFYLR. The helical transmembrane segment at 1026–1046 threads the bilayer; that stretch reads FILWAVAALALFRALGSTTFA. Residues 1047–1097 are Cytoplasmic-facing; the sequence is AINLVSALVEGRVRLRLNMKGFRWIKEKWGDADVKGKFEGLGDRARGLARR.

The protein belongs to the chitin synthase family.

It is found in the cell membrane. The catalysed reaction is [(1-&gt;4)-N-acetyl-beta-D-glucosaminyl](n) + UDP-N-acetyl-alpha-D-glucosamine = [(1-&gt;4)-N-acetyl-beta-D-glucosaminyl](n+1) + UDP + H(+). In terms of biological role, polymerizes chitin, a structural polymer of the cell wall and septum, by transferring the sugar moiety of UDP-GlcNAc to the non-reducing end of the growing chitin polymer. The polypeptide is Chitin synthase 2 (chs-2) (Neurospora crassa (strain ATCC 24698 / 74-OR23-1A / CBS 708.71 / DSM 1257 / FGSC 987)).